The sequence spans 444 residues: Trigger factor (444 aa).

The 86-residue stretch at Gly-166–Ala-251 folds into the PPIase FKBP-type domain.

Belongs to the FKBP-type PPIase family. Tig subfamily.

The protein resides in the cytoplasm. The catalysed reaction is [protein]-peptidylproline (omega=180) = [protein]-peptidylproline (omega=0). Functionally, involved in protein export. Acts as a chaperone by maintaining the newly synthesized protein in an open conformation. Functions as a peptidyl-prolyl cis-trans isomerase. The sequence is that of Trigger factor from Cereibacter sphaeroides (strain ATCC 17029 / ATH 2.4.9) (Rhodobacter sphaeroides).